Reading from the N-terminus, the 274-residue chain is 3',5'-cyclic adenosine monophosphate phosphodiesterase CpdA (274 aa).

Fe cation contacts are provided by D21, H23, D63, N93, H163, H202, and H204. Residues H23, D63, and 93-94 (NH) contribute to the AMP site. Position 204 (H204) interacts with AMP.

This sequence belongs to the cyclic nucleotide phosphodiesterase class-III family. The cofactor is Fe(2+).

The enzyme catalyses 3',5'-cyclic AMP + H2O = AMP + H(+). Its function is as follows. Hydrolyzes cAMP to 5'-AMP. Plays an important regulatory role in modulating the intracellular concentration of cAMP, thereby influencing cAMP-dependent processes. The protein is 3',5'-cyclic adenosine monophosphate phosphodiesterase CpdA of Vibrio vulnificus (strain CMCP6).